Here is a 489-residue protein sequence, read N- to C-terminus: Cobyric acid synthase (489 aa).

In terms of domain architecture, GATase cobBQ-type spans 251 to 444 (GLIIAVIRLP…LHGIFANDTF (194 aa)). Cys329 acts as the Nucleophile in catalysis. The active site involves His436.

The protein belongs to the CobB/CobQ family. CobQ subfamily.

It participates in cofactor biosynthesis; adenosylcobalamin biosynthesis. Its function is as follows. Catalyzes amidations at positions B, D, E, and G on adenosylcobyrinic A,C-diamide. NH(2) groups are provided by glutamine, and one molecule of ATP is hydrogenolyzed for each amidation. The chain is Cobyric acid synthase from Chloroflexus aurantiacus (strain ATCC 29366 / DSM 635 / J-10-fl).